The primary structure comprises 84 residues: Putative UPF0320 protein YNL337W (84 aa).

It belongs to the UPF0320 family.

In Saccharomyces cerevisiae (strain ATCC 204508 / S288c) (Baker's yeast), this protein is Putative UPF0320 protein YNL337W.